The following is a 697-amino-acid chain: Phosphatase and actin regulator 4-B (697 aa).

Residues 42–67 (EVLERKISMRKPREELVKRGLIVDVP) form an RPEL 1 repeat. 2 disordered regions span residues 63–381 (IVDV…LTLA) and 450–569 (LKVP…SKDE). A compositionally biased stretch (basic and acidic residues) spans 189–202 (HVPEKTSEKYRPKS). Pro residues-rich tracts occupy residues 317–326 (PSPPLPPKRA) and 370–380 (APNPPVPPLTL). Acidic residues-rich tracts occupy residues 454-469 (DDDDDEDELSLEDESL), 501-514 (QEEDEEEGVSDTDS), and 522-532 (EEDEDEEEEET). RPEL repeat units follow at residues 579–604 (TQLNRRLSQRPTAEELEQRNILQKNE) and 616–641 (RRLTRKLSQRPTVAELLERKILRFNE).

Belongs to the phosphatase and actin regulator family. In terms of assembly, binds ppp1ca and actin.

The protein localises to the cytoplasm. It localises to the cell projection. It is found in the lamellipodium. Its function is as follows. Regulator of protein phosphatase 1 (PP1) required for neural tube and optic fissure closure, and enteric neural crest cell (ENCCs) migration during development. Acts as an activator of PP1. During neural tube closure, localizes to the ventral neural tube and activates PP1, leading to down-regulate cell proliferation within cranial neural tissue and the neural retina. Also acts as a regulator of migration of enteric neural crest cells (ENCCs) by activating PP1, leading to repression of the integrin signaling through the rho/rock pathway. The chain is Phosphatase and actin regulator 4-B (phactr4-b) from Xenopus laevis (African clawed frog).